Here is a 540-residue protein sequence, read N- to C-terminus: MTAIVEPSVTTGPIAGSSKVYRELDGVPGARVPFRRVHLSTGDHFDLYDTSGPYTDPDATIDLTAGLPARPGRVRDRGTQLQRARAGEITAEMAFIAAREGMPAELVRDEVARGRAVIPANHNHPEIEPMIIGKAFATKVNANIGNSAVTSSIAEEVDKMVWATRWGADTIMDLSTGKNIHETREWILRNSPVPVGTVPIYQALEKVKGDPTLLTWEIYRDTVIEQCEQGVDYMTVHAGVLLRYVPLTAKRVTGIVSRGGSIMAAWCLAHHRESFLYTNFDELCEIFARYDVTFSLGDGLRPGSIADANDAAQFAELRTLGELTKIAKSHGVQVMIEGPGHVPMHKIVENVRLEEEWCEEAPFYTLGPLATDIAPAYDHITSAIGAAIIAQAGTAMLCYVTPKEHLGLPDRKDVKDGVIAYKIAAHAGDLAKGHPHAQERDNALSQARFEFRWNDQFALSLDPDTAREYHDETLPAEPAKTAHFCSMCGPKFCSMRITQDVRDYAAKHGLDSEEAIEAAMADKSREFAEHGNRVYLPLAQ.

Substrate contacts are provided by residues asparagine 143, methionine 172, tyrosine 201, histidine 237, 257–259, 298–301, and glutamate 337; these read SRG and DGLR. Histidine 341 serves as a coordination point for Zn(2+). A substrate-binding site is contributed by tyrosine 364. Residue histidine 405 coordinates Zn(2+). Residues cysteine 485, cysteine 488, and cysteine 493 each coordinate [4Fe-4S] cluster.

Belongs to the ThiC family. The cofactor is [4Fe-4S] cluster.

The enzyme catalyses 5-amino-1-(5-phospho-beta-D-ribosyl)imidazole + S-adenosyl-L-methionine = 4-amino-2-methyl-5-(phosphooxymethyl)pyrimidine + CO + 5'-deoxyadenosine + formate + L-methionine + 3 H(+). Its pathway is cofactor biosynthesis; thiamine diphosphate biosynthesis. Its function is as follows. Catalyzes the synthesis of the hydroxymethylpyrimidine phosphate (HMP-P) moiety of thiamine from aminoimidazole ribotide (AIR) in a radical S-adenosyl-L-methionine (SAM)-dependent reaction. This Mycobacterium avium (strain 104) protein is Phosphomethylpyrimidine synthase.